Here is a 63-residue protein sequence, read N- to C-terminus: Progonadoliberin-1 (63 aa).

Position 1 is a pyrrolidone carboxylic acid (glutamine 1). A Glycine amide modification is found at glycine 10.

This sequence belongs to the GnRH family. Post-translationally, the precursor is cleaved by ACE, which removes the Gly-Lys-Arg peptide at the C-terminus, leading to mature hormone. The mature form of Gonadoliberin-1 is also cleaved and degraded by ACE.

The protein localises to the secreted. In terms of biological role, stimulates the secretion of gonadotropins; it stimulates the secretion of both luteinizing and follicle-stimulating hormones. The chain is Progonadoliberin-1 (GNRH1) from Mesocricetus auratus (Golden hamster).